We begin with the raw amino-acid sequence, 795 residues long: Protein Jade-3 (795 aa).

Low complexity predominate over residues Met-1–Asn-25. The disordered stretch occupies residues Met-1–Pro-41. Residues Asp-201 to Gly-251 form a PHD-type 1 zinc finger. A C2HC pre-PHD-type zinc finger spans residues Thr-253–Val-287. Residues Leu-311–Ser-367 form a PHD-type 2 zinc finger. 3 disordered regions span residues His-630 to Leu-654, Ala-667 to His-687, and Phe-714 to Arg-795. Polar residues-rich tracts occupy residues Ser-678–His-687 and Lys-720–Arg-732.

This sequence belongs to the JADE family. As to quaternary structure, component of the HBO1 complex.

Its function is as follows. Scaffold subunit of some HBO1 complexes, which have a histone H4 acetyltransferase activity. The chain is Protein Jade-3 (jade3) from Danio rerio (Zebrafish).